Here is a 147-residue protein sequence, read N- to C-terminus: Large ribosomal subunit protein uL11 (147 aa).

This sequence belongs to the universal ribosomal protein uL11 family. In terms of assembly, part of the ribosomal stalk of the 50S ribosomal subunit. Interacts with L10 and the large rRNA to form the base of the stalk. L10 forms an elongated spine to which L12 dimers bind in a sequential fashion forming a multimeric L10(L12)X complex. One or more lysine residues are methylated.

Forms part of the ribosomal stalk which helps the ribosome interact with GTP-bound translation factors. In Bacteroides fragilis (strain ATCC 25285 / DSM 2151 / CCUG 4856 / JCM 11019 / LMG 10263 / NCTC 9343 / Onslow / VPI 2553 / EN-2), this protein is Large ribosomal subunit protein uL11.